The chain runs to 229 residues: Large ribosomal subunit protein uL1 (229 aa).

Belongs to the universal ribosomal protein uL1 family. In terms of assembly, part of the 50S ribosomal subunit.

Functionally, binds directly to 23S rRNA. The L1 stalk is quite mobile in the ribosome, and is involved in E site tRNA release. Protein L1 is also a translational repressor protein, it controls the translation of the L11 operon by binding to its mRNA. The protein is Large ribosomal subunit protein uL1 of Lactococcus lactis subsp. lactis (strain IL1403) (Streptococcus lactis).